Consider the following 175-residue polypeptide: Adenylyl-sulfate kinase (175 aa).

An ATP-binding site is contributed by 12–19 (GLSGAGKT). The active-site Phosphoserine intermediate is Ser-86.

It belongs to the APS kinase family.

It catalyses the reaction adenosine 5'-phosphosulfate + ATP = 3'-phosphoadenylyl sulfate + ADP + H(+). The protein operates within sulfur metabolism; hydrogen sulfide biosynthesis; sulfite from sulfate: step 2/3. Functionally, catalyzes the synthesis of activated sulfate. This chain is Adenylyl-sulfate kinase, found in Synechococcus sp. (strain JA-2-3B'a(2-13)) (Cyanobacteria bacterium Yellowstone B-Prime).